A 339-amino-acid chain; its full sequence is Probable protein phosphatase 2C 28 (339 aa).

The 248-residue stretch at 87-334 (DHGYHLVKGQ…DDISCVVVSF (248 aa)) folds into the PPM-type phosphatase domain. Residues aspartate 124, glycine 125, aspartate 286, and aspartate 325 each coordinate Mn(2+).

The protein belongs to the PP2C family. The cofactor is Mg(2+). Mn(2+) is required as a cofactor.

It carries out the reaction O-phospho-L-seryl-[protein] + H2O = L-seryl-[protein] + phosphate. The catalysed reaction is O-phospho-L-threonyl-[protein] + H2O = L-threonyl-[protein] + phosphate. The polypeptide is Probable protein phosphatase 2C 28 (Arabidopsis thaliana (Mouse-ear cress)).